The primary structure comprises 377 residues: Signal peptide peptidase (377 aa).

The tract at residues 1–27 is disordered; that stretch reads MDSALSDPHNGSAEAGGPTNSTTRPPS. Residues 1–31 lie on the Lumenal side of the membrane; that stretch reads MDSALSDPHNGSAEAGGPTNSTTRPPSTPEG. N-linked (GlcNAc...) asparagine glycosylation is found at N10 and N20. Residues 32 to 52 form a helical membrane-spanning segment; that stretch reads IALAYGSLLLMALLPIFFGAL. Over 53-77 the chain is Cytoplasmic; it reads RSVRCARGKNASDMPETITSRDAAR. Residues 78–98 traverse the membrane as a helical segment; sequence FPIIASCTLLGLYLFFKIFSQ. Residues 99–100 are Lumenal-facing; the sequence is EY. Residues 101–121 traverse the membrane as a helical segment; sequence INLLLSMYFFVLGILALSHTI. At 122 to 157 the chain is on the cytoplasmic side; it reads SPFMNKFFPASFPNRQYQLLFTQGSGENKEEIINYE. A helical transmembrane segment spans residues 158–178; sequence FDTKDLVCLGLSSIVGVWYLL. The Lumenal segment spans residues 179 to 181; that stretch reads RKH. A helical transmembrane segment spans residues 182-202; sequence WIANNLFGLAFSLNGVELLHL. Over 203 to 209 the chain is Cytoplasmic; it reads NNVSTGC. The chain crosses the membrane as a helical span at residues 210–230; the sequence is ILLGGLFIYDVFWVFGTNVMV. Residue D219 is part of the active site. Residues 231-256 are Lumenal-facing; it reads TVAKSFEAPIKLVFPQDLLEKGLEAN. A helical transmembrane segment spans residues 257–277; sequence NFAMLGLGDVVIPGIFIALLL. D265 is an active-site residue. Topologically, residues 278-290 are cytoplasmic; sequence RFDISLKKNTHTY. Residues 291 to 311 form a helical membrane-spanning segment; the sequence is FYTSFAAYIFGLGLTIFIMHI. Residues 312 to 314 lie on the Lumenal side of the membrane; sequence FKH. A helical membrane pass occupies residues 315-335; the sequence is AQPALLYLVPACIGFPVLVAL. Positions 317–319 match the PAL motif; sequence PAL. Topologically, residues 336-377 are cytoplasmic; sequence AKGEVTEMFSYEESNPKDPAAVTESKEGTEASASKGLEKKEK. The disordered stretch occupies residues 345-377; that stretch reads SYEESNPKDPAAVTESKEGTEASASKGLEKKEK. Position 367 is a phosphoserine (S367).

It belongs to the peptidase A22B family. In terms of assembly, monomer. Homodimer. Interacts with RNF139. Interacts with DERL1 and XBP1 isoform 1. In terms of processing, N-glycosylated. In terms of tissue distribution, widely expressed with highest levels in kidney, liver, placenta, lung, leukocytes and small intestine and reduced expression in heart and skeletal muscle. Expressed abundantly in the CNS with highest levels in thalamus and medulla.

The protein localises to the endoplasmic reticulum membrane. The protein resides in the membrane. It localises to the cell membrane. Its function is as follows. Catalyzes intramembrane proteolysis of signal peptides that have been removed from precursors of secretory and membrane proteins, resulting in the release of the fragment from the ER membrane into the cytoplasm. Required to generate lymphocyte cell surface (HLA-E) epitopes derived from MHC class I signal peptides. May be necessary for the removal of the signal peptide that remains attached to the hepatitis C virus core protein after the initial proteolytic processing of the polyprotein. Involved in the intramembrane cleavage of the integral membrane protein PSEN1. Cleaves the integral membrane protein XBP1 isoform 1 in a DERL1/RNF139-dependent manner. May play a role in graft rejection. In Homo sapiens (Human), this protein is Signal peptide peptidase.